Consider the following 83-residue polypeptide: Kappa-theraphotoxin-Cg2b (83 aa).

The first 21 residues, 1–21 (MKGSAFAIILGLVVLCACSFA), serve as a signal peptide directing secretion. Residues 22 to 53 (EDEQDQFASPNELLRSMFLESRHELIPEVEGR) constitute a propeptide that is removed on maturation. Intrachain disulfides connect cysteine 55–cysteine 69, cysteine 62–cysteine 74, and cysteine 68–cysteine 78.

Belongs to the neurotoxin 30 (phrixotoxin) family. As to expression, expressed by the venom gland.

The protein localises to the secreted. Its function is as follows. Probable ion channel inhibitor. This Chilobrachys guangxiensis (Chinese earth tiger tarantula) protein is Kappa-theraphotoxin-Cg2b.